A 193-amino-acid chain; its full sequence is Ribosomal RNA small subunit methyltransferase G (193 aa).

Residues glycine 62, phenylalanine 67, 111 to 112 (IE), and arginine 125 each bind S-adenosyl-L-methionine.

This sequence belongs to the methyltransferase superfamily. RNA methyltransferase RsmG family.

The protein resides in the cytoplasm. The catalysed reaction is guanosine(527) in 16S rRNA + S-adenosyl-L-methionine = N(7)-methylguanosine(527) in 16S rRNA + S-adenosyl-L-homocysteine. Specifically methylates the N7 position of guanine in position 527 of 16S rRNA. In Gluconobacter oxydans (strain 621H) (Gluconobacter suboxydans), this protein is Ribosomal RNA small subunit methyltransferase G.